The sequence spans 250 residues: Small ribosomal subunit protein uS2 (250 aa).

Belongs to the universal ribosomal protein uS2 family.

This is Small ribosomal subunit protein uS2 from Paracidovorax citrulli (strain AAC00-1) (Acidovorax citrulli).